We begin with the raw amino-acid sequence, 474 residues long: 3-isopropylmalate dehydratase large subunit (474 aa).

Residues C355, C415, and C418 each coordinate [4Fe-4S] cluster.

The protein belongs to the aconitase/IPM isomerase family. LeuC type 1 subfamily. In terms of assembly, heterodimer of LeuC and LeuD. [4Fe-4S] cluster serves as cofactor.

The catalysed reaction is (2R,3S)-3-isopropylmalate = (2S)-2-isopropylmalate. Its pathway is amino-acid biosynthesis; L-leucine biosynthesis; L-leucine from 3-methyl-2-oxobutanoate: step 2/4. Functionally, catalyzes the isomerization between 2-isopropylmalate and 3-isopropylmalate, via the formation of 2-isopropylmaleate. This chain is 3-isopropylmalate dehydratase large subunit, found in Shewanella sp. (strain ANA-3).